We begin with the raw amino-acid sequence, 508 residues long: NADH-quinone oxidoreductase subunit N 1 (508 aa).

Transmembrane regions (helical) follow at residues 2 to 22 (ILGPYIAVSPLIVISLGGALL), 47 to 67 (ALGTAITLLAGAVFSGAVGFV), 87 to 107 (FTLFFSFVLCLGGALAALLAG), 126 to 146 (FSTVGAIILAGAGDLLTLFLG), 175 to 195 (FLLGSFAAALLLYGGALIYGA), 220 to 240 (ALLLIGAALVLVGLAFKVSAV), 260 to 280 (FMAVAVKGAAFATLLRVLLGA), 291 to 311 (AGWPPAVAVMALLTMTVANLI), 321 to 341 (MLAYSSIAHAGYLLVGVAATV), 351 to 371 (VMFYLLAYTVSTVGAFGTLIL), 396 to 416 (ALAFSLFLLSLAGVPPTAGFF), 431 to 453 (YTLSVALLLNSVLSAYYYLRVLV), and 479 to 499 (LVVSAVLVMVLGIWPTTSLGI).

Belongs to the complex I subunit 2 family. In terms of assembly, NDH-1 is composed of 14 different subunits. Subunits NuoA, H, J, K, L, M, N constitute the membrane sector of the complex.

The protein resides in the cell inner membrane. It catalyses the reaction a quinone + NADH + 5 H(+)(in) = a quinol + NAD(+) + 4 H(+)(out). Its function is as follows. NDH-1 shuttles electrons from NADH, via FMN and iron-sulfur (Fe-S) centers, to quinones in the respiratory chain. The immediate electron acceptor for the enzyme in this species is believed to be ubiquinone. Couples the redox reaction to proton translocation (for every two electrons transferred, four hydrogen ions are translocated across the cytoplasmic membrane), and thus conserves the redox energy in a proton gradient. This chain is NADH-quinone oxidoreductase subunit N 1, found in Sorangium cellulosum (strain So ce56) (Polyangium cellulosum (strain So ce56)).